A 417-amino-acid polypeptide reads, in one-letter code: GPI mannosyltransferase 2 (417 aa).

Helical transmembrane passes span 10–30 (FLII…LVWL), 104–124 (IVLK…WIVY), 142–162 (LALT…LISV), 167–187 (IAFT…SFDV), 206–226 (FCFA…LFYV), 239–259 (ITSI…FVYF), 312–332 (IPNF…ITYF), 344–364 (YIWI…VQII), and 394–414 (YYVM…ACFL).

This sequence belongs to the PIGV family.

The protein localises to the endoplasmic reticulum membrane. It participates in glycolipid biosynthesis; glycosylphosphatidylinositol-anchor biosynthesis. Functionally, mannosyltransferase involved in glycosylphosphatidylinositol-anchor biosynthesis. Transfers the second mannose to the glycosylphosphatidylinositol during GPI precursor assembly. The protein is GPI mannosyltransferase 2 (GPI18) of Kluyveromyces lactis (strain ATCC 8585 / CBS 2359 / DSM 70799 / NBRC 1267 / NRRL Y-1140 / WM37) (Yeast).